We begin with the raw amino-acid sequence, 399 residues long: Serine/threonine-protein kinase PKZ1 (399 aa).

A disordered region spans residues 30–50 (PMQCAYQTQSHSNPEGAKRGR). Residues 92 to 371 (WQLFDQIGAG…ADQMLQHPWM (280 aa)) form the Protein kinase domain. ATP contacts are provided by residues 98 to 106 (IGAGAFGVV) and Lys121. Catalysis depends on Asp219, which acts as the Proton acceptor.

Belongs to the protein kinase superfamily. CAMK Ser/Thr protein kinase family. In terms of assembly, interacts with BZP1.

The enzyme catalyses L-seryl-[protein] + ATP = O-phospho-L-seryl-[protein] + ADP + H(+). It carries out the reaction L-threonyl-[protein] + ATP = O-phospho-L-threonyl-[protein] + ADP + H(+). Functionally, may regulate an early stage of the zoospore pathway. This Phytophthora infestans (Potato late blight agent) protein is Serine/threonine-protein kinase PKZ1.